The primary structure comprises 145 residues: 3-hydroxyacyl-[acyl-carrier-protein] dehydratase FabZ (145 aa).

His-47 is an active-site residue.

The protein belongs to the thioester dehydratase family. FabZ subfamily.

The protein resides in the cytoplasm. It carries out the reaction a (3R)-hydroxyacyl-[ACP] = a (2E)-enoyl-[ACP] + H2O. In terms of biological role, involved in unsaturated fatty acids biosynthesis. Catalyzes the dehydration of short chain beta-hydroxyacyl-ACPs and long chain saturated and unsaturated beta-hydroxyacyl-ACPs. In Polaromonas naphthalenivorans (strain CJ2), this protein is 3-hydroxyacyl-[acyl-carrier-protein] dehydratase FabZ.